Consider the following 199-residue polypeptide: GTP cyclohydrolase-2 (199 aa).

Residue arginine 49–glutamate 53 coordinates GTP. The Zn(2+) site is built by cysteine 54, cysteine 65, and cysteine 67. GTP-binding positions include glutamine 70, glutamate 92–arginine 94, and threonine 114. Catalysis depends on aspartate 126, which acts as the Proton acceptor. The active-site Nucleophile is the arginine 128. Threonine 149 and lysine 154 together coordinate GTP.

This sequence belongs to the GTP cyclohydrolase II family. Homodimer. Zn(2+) serves as cofactor.

The enzyme catalyses GTP + 4 H2O = 2,5-diamino-6-hydroxy-4-(5-phosphoribosylamino)-pyrimidine + formate + 2 phosphate + 3 H(+). It functions in the pathway cofactor biosynthesis; riboflavin biosynthesis; 5-amino-6-(D-ribitylamino)uracil from GTP: step 1/4. Catalyzes the conversion of GTP to 2,5-diamino-6-ribosylamino-4(3H)-pyrimidinone 5'-phosphate (DARP), formate and pyrophosphate. The sequence is that of GTP cyclohydrolase-2 from Blochmanniella floridana.